Consider the following 524-residue polypeptide: Butyrophilin subfamily 1 member A1 (524 aa).

A signal peptide spans 1–26; sequence MAVPTNSCLLVCLLTLTVLQLPTLDS. Over 27 to 247 the chain is Extracellular; that stretch reads AAPFDVTAPQ…APFVPRLTPW (221 aa). 2 consecutive Ig-like V-type domains span residues 29 to 141 and 149 to 235; these read PFDV…VYLK and PQIS…VEIS. Cystine bridges form between Cys-51–Cys-125 and Cys-165–Cys-219. Asn-56 and Asn-216 each carry an N-linked (GlcNAc...) asparagine glycan. The chain crosses the membrane as a helical span at residues 248–268; sequence IVAVAIILLALGFLTIGSIFF. The Cytoplasmic segment spans residues 269 to 524; it reads TWKLYKERSS…IPFSPSQAAP (256 aa). The region spanning 286–480 is the B30.2/SPRY domain; that stretch reads SKERLLEELR…LTICSTANGP (195 aa).

The protein belongs to the immunoglobulin superfamily. BTN/MOG family. Seems to associate with xanthine dehydrogenase/oxidase. N-glycosylated. As to expression, strongly expressed in lactating mammary tissue (at protein level). About 100-fold lower levels in virgin mammary tissue. Also detected in spleen and thymus at 10-20 times lower levels compared to those detected in virgin mammary gland. Very low levels in several other tissues, including brain, heart, kidney, lymph node, lung and small intestine. In the thymus, detected in the stroma, in epithelial cells (at protein level). Most prominent in medullary areas of the thymus and at the corticomedullary junction (at protein level).

It is found in the membrane. Functionally, may function in the secretion of milk-fat droplets. May act as a specific membrane-associated receptor for the association of cytoplasmic droplets with the apical plasma membrane. Inhibits the proliferation of CD4 and CD8 T-cells activated by anti-CD3 antibodies, T-cell metabolism and IL2 and IFNG secretion. This Mus musculus (Mouse) protein is Butyrophilin subfamily 1 member A1 (Btn1a1).